Reading from the N-terminus, the 111-residue chain is Natriuretic peptide TNP-b (111 aa).

The signal sequence occupies residues 1–27 (MVGLSRLAGGGLLLLLLLALLPLALDG). The propeptide occupies 28–71 (KPAPLPQALPEALAGGTTALRRDVTEEQQQQLVAEESSGPAAGR). Disordered stretches follow at residues 51–77 (VTEE…PKIG) and 92–111 (SGLG…PGGS). A disulfide bridge links Cys-80 with Cys-96. A propeptide spanning residues 107 to 111 (IPGGS) is cleaved from the precursor.

This sequence belongs to the natriuretic peptide family. Expressed by the venom gland.

It localises to the secreted. Functionally, snake venom natriuretic peptide that exhibits vasoactive and probable hypotensive activity. Is only weakly active on natriuretic peptide receptor-C (NPR3). The polypeptide is Natriuretic peptide TNP-b (Oxyuranus scutellatus scutellatus (Australian taipan)).